Reading from the N-terminus, the 433-residue chain is Transcription factor elt-2 (433 aa).

Disordered regions lie at residues M1–R47 and G194–L235. Residues P27 to S43 are compositionally biased toward polar residues. A compositionally biased stretch (low complexity) spans A211–G234. The GATA-type zinc finger occupies C237–C261. The tract at residues S275–R332 is disordered. Over residues A310–R324 the composition is skewed to polar residues.

As to quaternary structure, interacts with lag-1. Interacts with pha-4. Interacts with rpt-6. In terms of processing, may be ubiquitinated in response to infection by B.pseudomallei. In terms of tissue distribution, expressed in the intestine.

The protein resides in the nucleus. In terms of biological role, transcriptional activator that binds to the consensus sequence 5'-[AT]GATA[AG]-3'. Predominantly directs the transcription of intestinal genes such as ges-1, cpr-6, pho-1, ftn-1, vit-2 and lev-11, and itself. Required for gut-specific differentiation, specifically acting with the GATA region-binding transcription factor elt-7 to control normal gene expression and promote normal formation of the intestine. Regulates intestinal gene expression in response to hypoxia to promote longevity. Modulation of longevity may, in part, be the result of regulation of expression of daf-16 isoforms d and f in the intestine. Regulates tissue specific gene expression at basal levels and in response to bacterial infection in the intestine to control innate immunity. Plays a role in the induction of metal-responsive genes, activating gene expression from zinc-activated promoters and iron-dependent promoters and enhancers. May regulate the expression of genes that control sensitivity to oxidative stress, in a mab-3-dependent manner, and osmotic stress, in conjunction with the GATA region-binding transcription factor elt-3. May play a role in sphingolipid signaling by regulating the expression of the sphingosine-1-phosphate degrading enzyme, sphingosine-1-phosphate lyase. May act with the Notch signaling pathway to promote endodermal gene expression. Has a protective role in response to infection by Gram-negative bacteria such as S.enterica, E.coli, P.aeruginosa and B.pseudomallei, Gram-positive bacterium E.faecalis and fungal pathogen C.neoformans. An association with the 26S proteasome regulatory subunit rpt-6, in part, controls gene expression in response to infection by P.aeruginosa. Regulates gene expression during the recovery phase following a bacterial infection. May act with p38-activated transcription factors to control p38 gene induction in response to bacterial infection. Controls lysosome formation in the intestine by controlling lysosomal gene expression. The sequence is that of Transcription factor elt-2 from Caenorhabditis elegans.